Reading from the N-terminus, the 669-residue chain is NAD-dependent malic enzyme, mitochondrial (669 aa).

A compositionally biased stretch (polar residues) spans 33 to 43; sequence IQQSRLYSSNT. Residues 33–68 form a disordered region; it reads IQQSRLYSSNTRSHKATTTRENTFQKPYSDEEVTKT. Arg142 is a fumarate binding site. The Proton donor role is filled by Tyr187. Catalysis depends on Lys259, which acts as the Proton acceptor. A divalent metal cation is bound by residues Glu330, Asp331, and Asp354. NAD(+)-binding residues include Ala387 and Ala390. Positions 499 and 539 each coordinate (S)-malate.

Belongs to the malic enzymes family. Mg(2+) serves as cofactor. Mn(2+) is required as a cofactor.

The protein localises to the mitochondrion matrix. It carries out the reaction (S)-malate + NAD(+) = pyruvate + CO2 + NADH. The enzyme catalyses oxaloacetate + H(+) = pyruvate + CO2. Functionally, NAD-dependent mitochondrial malic enzyme that catalyzes the oxidative decarboxylation of malate to pyruvate. The chain is NAD-dependent malic enzyme, mitochondrial (MAE1) from Saccharomyces cerevisiae (strain ATCC 204508 / S288c) (Baker's yeast).